The primary structure comprises 448 residues: N-succinylarginine dihydrolase (448 aa).

Residues glycine 19–serine 28, asparagine 110, and histidine 137–arginine 138 contribute to the substrate site. Residue glutamate 174 is part of the active site. Arginine 214 provides a ligand contact to substrate. Histidine 250 is an active-site residue. The substrate site is built by aspartate 252 and asparagine 365. The active-site Nucleophile is cysteine 371.

It belongs to the succinylarginine dihydrolase family. Homodimer.

The catalysed reaction is N(2)-succinyl-L-arginine + 2 H2O + 2 H(+) = N(2)-succinyl-L-ornithine + 2 NH4(+) + CO2. Its pathway is amino-acid degradation; L-arginine degradation via AST pathway; L-glutamate and succinate from L-arginine: step 2/5. Catalyzes the hydrolysis of N(2)-succinylarginine into N(2)-succinylornithine, ammonia and CO(2). The protein is N-succinylarginine dihydrolase of Pseudomonas syringae pv. tomato (strain ATCC BAA-871 / DC3000).